Here is a 785-residue protein sequence, read N- to C-terminus: Putative endonuclease MutS2 (785 aa).

Residue 335–342 participates in ATP binding; that stretch reads GPNTGGKT. Positions 513 to 586 form a coiled coil; it reads TAEHNEVDTM…AEKVKAAMKE (74 aa). The segment at 636 to 785 is partially complements a deletion for mitomycin C (MMC) resistance and for chromosomal DNA transformation; that stretch reads KRDFKPGDEV…GSGVTVVELK (150 aa). The segment at 641 to 681 is KOW region; it reads PGDEVKVLTFGQKGTLLEKTGGNEWNVQIGILKMKVKEKDL. The 76-residue stretch at 710–785 folds into the Smr domain; the sequence is LDLRGERYEN…GSGVTVVELK (76 aa).

It belongs to the DNA mismatch repair MutS family. MutS2 subfamily. As to quaternary structure, binds to ribosomes as a homodimer. Binds to stalled/collided disomes, association is greater in (ribosome-targeted) antibiotic-treated cells (with increased stalling at specific mRNA sites). The clamp domain of one monomer binds the A-site finger, the 23S rRNA of the central protuberance and ribosomal protein uL5 of the leading (stalled) ribosome, while the other monomer binds in a gap between the ribosomal central protuberance and the L1 stalk of the leading ribosome.

It localises to the cytoplasm. Functionally, acts as a ribosome collision sensor splitting the ribosome into its 2 subunits. Detects stalled/collided disomes (pairs of ribosomes where the leading ribosome is stalled and a second ribosome has collided with it) which it binds and splits, by an ATP-hydrolysis driven conformational change. Does not seem to have endoribonuclease activity (in the context of ribosome stalling). Acts upstream of the ribosome quality control system (RQC), a ribosome-associated complex that mediates the extraction of incompletely synthesized nascent chains from stalled ribosomes and their subsequent degradation, probably generates substrates for RQC. In terms of biological role, does not seem to be involved in mismatch repair or in the prevention of interspecific recombination during DNA transformation. Might be involved in homologous recombination. Putative endonuclease that may be involved in the suppression of homologous recombination and may therefore have a key role in the control of bacterial genetic diversity. The protein is Putative endonuclease MutS2 of Bacillus subtilis (strain 168).